A 338-amino-acid chain; its full sequence is Methionine import ATP-binding protein MetN (338 aa).

An ABC transporter domain is found at 2-241; sequence ISLDGIRKVF…PKEHITKEFV (240 aa). 38–45 lines the ATP pocket; sequence GYSGAGKS.

The protein belongs to the ABC transporter superfamily. Methionine importer (TC 3.A.1.24) family. In terms of assembly, the complex is composed of two ATP-binding proteins (MetN), two transmembrane proteins (MetI) and a solute-binding protein (MetQ).

Its subcellular location is the cell membrane. It catalyses the reaction L-methionine(out) + ATP + H2O = L-methionine(in) + ADP + phosphate + H(+). The catalysed reaction is D-methionine(out) + ATP + H2O = D-methionine(in) + ADP + phosphate + H(+). Part of the ABC transporter complex MetNIQ involved in methionine import. Responsible for energy coupling to the transport system. This Halalkalibacterium halodurans (strain ATCC BAA-125 / DSM 18197 / FERM 7344 / JCM 9153 / C-125) (Bacillus halodurans) protein is Methionine import ATP-binding protein MetN.